Consider the following 209-residue polypeptide: NAD(P)H dehydrogenase (quinone) (209 aa).

Residues 4–199 (VNIIFYSMYG…AMARYQGRHV (196 aa)) enclose the Flavodoxin-like domain. FMN is bound by residues 10–15 (SMYGHV) and 87–89 (TRY). Residue Tyr12 coordinates NAD(+). Trp107 is a substrate binding site. Residues 122–128 (SSGTQHG) and His143 contribute to the FMN site.

This sequence belongs to the WrbA family. It depends on FMN as a cofactor.

The catalysed reaction is a quinone + NADH + H(+) = a quinol + NAD(+). It catalyses the reaction a quinone + NADPH + H(+) = a quinol + NADP(+). This Methanosarcina acetivorans (strain ATCC 35395 / DSM 2834 / JCM 12185 / C2A) protein is NAD(P)H dehydrogenase (quinone).